Reading from the N-terminus, the 119-residue chain is Toxin ICK-8 (119 aa).

A signal peptide spans 1–19 (MMKLYSLVIIATLAAAAFA). 4 disulfides stabilise this stretch: Cys59–Cys74, Cys67–Cys80, Cys71–Cys116, and Cys73–Cys87.

This sequence belongs to the neurotoxin 25 family. ICK-8 subfamily. As to expression, expressed by the venom gland.

The protein resides in the secreted. Ion channel inhibitor. This is Toxin ICK-8 from Trittame loki (Brush-footed trapdoor spider).